Consider the following 255-residue polypeptide: Glutamate racemase (255 aa).

Residues 7 to 8 (DS) and 39 to 40 (YG) each bind substrate. Catalysis depends on cysteine 70, which acts as the Proton donor/acceptor. 71 to 72 (NT) is a substrate binding site. Cysteine 181 serves as the catalytic Proton donor/acceptor. 182–183 (TH) lines the substrate pocket.

This sequence belongs to the aspartate/glutamate racemases family.

It carries out the reaction L-glutamate = D-glutamate. The protein operates within cell wall biogenesis; peptidoglycan biosynthesis. Provides the (R)-glutamate required for cell wall biosynthesis. The protein is Glutamate racemase of Helicobacter acinonychis (strain Sheeba).